Reading from the N-terminus, the 645-residue chain is DNA ligase (645 aa).

NAD(+) contacts are provided by residues 30–34, 79–80, and Glu106; these read DIEYD and SM. Lys108 functions as the N6-AMP-lysine intermediate in the catalytic mechanism. Positions 129, 163, and 302 each coordinate NAD(+). Zn(2+)-binding residues include Cys396, Cys399, Cys412, and Cys417. Positions 570-645 constitute a BRCT domain; the sequence is ISQNVFTKKT…ISEDEFKEML (76 aa).

The protein belongs to the NAD-dependent DNA ligase family. LigA subfamily. Mg(2+) serves as cofactor. The cofactor is Mn(2+).

The catalysed reaction is NAD(+) + (deoxyribonucleotide)n-3'-hydroxyl + 5'-phospho-(deoxyribonucleotide)m = (deoxyribonucleotide)n+m + AMP + beta-nicotinamide D-nucleotide.. DNA ligase that catalyzes the formation of phosphodiester linkages between 5'-phosphoryl and 3'-hydroxyl groups in double-stranded DNA using NAD as a coenzyme and as the energy source for the reaction. It is essential for DNA replication and repair of damaged DNA. The protein is DNA ligase of Campylobacter hominis (strain ATCC BAA-381 / DSM 21671 / CCUG 45161 / LMG 19568 / NCTC 13146 / CH001A).